Consider the following 256-residue polypeptide: MRLFLALLALGFAAVAAVPAYPQRIVGGSTTTIQQYPTIVALLFSRNGNTFFQACGGIILNNRNVLTAAHCPHGDAVNRWRVRSGSTYANSGGAVHNLNRVRIHPNFNRRTLDNDIAIMRTTSNIAFNNAAQPARIAGANYNLGDNQVVWAAGWGAIRSGGPSSEQLRHVQVWTVNQATCRSRYASIGRSVTDNMLCSGWLDVGGRDQCQGDSGGPLYHNGVVVGVCSWGEECALARFPGVNARVSRFANWIRNNS.

Positions 1–17 (MRLFLALLALGFAAVAA) are cleaved as a signal peptide. Residues 18–24 (VPAYPQR) constitute a propeptide, activation peptide. The Peptidase S1 domain occupies 25–256 (IVGGSTTTIQ…RFANWIRNNS (232 aa)). Cys-55 and Cys-71 are disulfide-bonded. Active-site charge relay system residues include His-70 and Asp-115. Disulfide bonds link Cys-180–Cys-197 and Cys-209–Cys-233. The Charge relay system role is filled by Ser-213.

Belongs to the peptidase S1 family. As to expression, midgut.

The protein localises to the secreted. It localises to the extracellular space. It carries out the reaction Preferential cleavage: Arg-|-Xaa, Lys-|-Xaa.. The protein is Trypsin, alkaline A of Manduca sexta (Tobacco hawkmoth).